The chain runs to 338 residues: Glycerol-3-phosphate dehydrogenase [NAD(P)+] (338 aa).

3 residues coordinate NADPH: Ser-13, Trp-14, and Lys-108. Residues Lys-108, Gly-139, and Ser-141 each coordinate sn-glycerol 3-phosphate. Residue Ala-143 participates in NADPH binding. The sn-glycerol 3-phosphate site is built by Lys-194, Asp-247, Ser-257, Arg-258, and Asn-259. The active-site Proton acceptor is Lys-194. Arg-258 contributes to the NADPH binding site. Positions 282 and 284 each coordinate NADPH.

This sequence belongs to the NAD-dependent glycerol-3-phosphate dehydrogenase family.

Its subcellular location is the cytoplasm. The catalysed reaction is sn-glycerol 3-phosphate + NAD(+) = dihydroxyacetone phosphate + NADH + H(+). It carries out the reaction sn-glycerol 3-phosphate + NADP(+) = dihydroxyacetone phosphate + NADPH + H(+). Its pathway is membrane lipid metabolism; glycerophospholipid metabolism. In terms of biological role, catalyzes the reduction of the glycolytic intermediate dihydroxyacetone phosphate (DHAP) to sn-glycerol 3-phosphate (G3P), the key precursor for phospholipid synthesis. The polypeptide is Glycerol-3-phosphate dehydrogenase [NAD(P)+] (Streptococcus pneumoniae (strain P1031)).